Reading from the N-terminus, the 656-residue chain is MMEPSEYHEYQARGKEMVDYICQYLSTVRERQVTPNVKPGYLRAQIPSSAPEEPDSWDSIFGDIEQIIMPGVVHWQSPHMHAYYPALTSWPSLLGDMLADAINCLGFTWASSPACTELEMNIMDWLAKMLGLPDFFLHHHPSSQGGGVLQRTVSESTLIALLAARKNKILEMKAHEPNADESSLNARLVAYASDQAHSSVEKAGLISLVKIKFLPVDDNFSLRGEALQKAIEEDKQQGLVPVFVCATLGTTGVCAFDKLSELGPICAREGLWLHVDAAYAGTAFLRPELRGFLKGIEYADSFTFNPSKWMMVHFDCTGFWVKDKYKLQQTFSVNPIYLRHANSGVATDFMHWQIPLSRRFRSIKLWFVIRSFGVKNLQAHVRHGTDMAKYFESLVRSDPVFEIPAERHLGLVVFRLKGPNCLTESVLKEIAKTGQVFLIPATIQDKLIIRFTVTSQFTTKDDILRDWNLIREAANLVLSQHCTSQPSPRAKNLIPPPVTRDSKDLTNGLSLESVNEGGDDPVQVRKIFRLPGDSLETTMDPFDDCFSEEASDTTKHKLSSFLFSYLSVQNKKKTMRSLSCNSMPMSAQKSPPPDASVKHGGFFRARIFSGFPEEMMMMKKGGFKKLIKFYSVPSFPECSSQCGTLQLPCCPLQAMV.

Residues tyrosine 84 and histidine 197 each coordinate substrate. Residue lysine 308 is modified to N6-(pyridoxal phosphate)lysine. Phosphoserine; by PKA is present on residues serine 343 and serine 362. The tract at residues 481–502 (HCTSQPSPRAKNLIPPPVTRDS) is disordered.

This sequence belongs to the group II decarboxylase family. In terms of assembly, homodimer. Requires pyridoxal 5'-phosphate as cofactor. Post-translationally, may be post-translationally processed. Brain, glandular regions of the stomach, mast cells and fetal liver.

The catalysed reaction is L-histidine + H(+) = histamine + CO2. Its pathway is amine and polyamine biosynthesis; histamine biosynthesis; histamine from L-histidine: step 1/1. Phosphorylation of brain HDC by cAMP-dependent protein kinase leads to enzyme inactivation. Catalyzes the biosynthesis of histamine from histidine. In Rattus norvegicus (Rat), this protein is Histidine decarboxylase (Hdc).